A 1849-amino-acid polypeptide reads, in one-letter code: Brefeldin A-inhibited guanine nucleotide-exchange protein 1 (1849 aa).

Residues 2 to 224 form a DCB; DCB:DCB domain and DCB:HUS domain interaction region; sequence YEGKKTKNMF…QEAKQMEKER (223 aa). Basic and acidic residues predominate over residues 46 to 58; sequence AETEKQSPPHGEA. 4 disordered regions span residues 46 to 65, 216 to 248, 267 to 302, and 378 to 413; these read AETE…SSTL, EAKQ…QLRY, LHTN…DQAT, and TPIS…SPGA. Position 52 is a phosphoserine (Ser52). Over residues 267–277 the composition is skewed to basic and acidic residues; the sequence is LHTNDVDKSLQ. Residues Ser286, Ser289, Ser290, Ser397, and Ser410 each carry the phosphoserine modification. The span at 394–409 shows a compositional bias: polar residues; it reads SVSSNDTQESGNSSGP. Positions 557-577 are HUS; DCB:HUS domain interaction; that stretch reads ADAQSVVDIYVNYDCDLNAAN. The SEC7 domain maps to 709–840; it reads FNKKPKRGIQ…IIMLTTDLHS (132 aa). The Nuclear localization signal (NLS) signature appears at 711–715; it reads KKPKR. Ser1079 carries the phosphoserine modification. The tract at residues 1543 to 1562 is disordered; that stretch reads RPNSGETAPPPPSPVSEKPL. Phosphoserine occurs at positions 1566 and 1569.

Homodimer. Interacts with ARFGEF2/BIG2; both proteins are probably part of the same or very similar macromolecular complexes. Interacts with FKBP2. Interacts with MYO9B. Interacts with PRKAR1A and PRKAR2A. Interacts with PPP1CC. Interacts with NCL, FBL, NUP62 and U3 small nucleolar RNA. Interacts with DPY30. Interacts with PDE3A. Interacts with KANK1. Interacts with TBC1D22A and TBC1D22B. Interacts (via N-terminus) with ARL1. In terms of processing, phosphorylated. In vitro phosphorylated by PKA reducing its GEF activity and dephosphorylated by phosphatase PP1. In terms of tissue distribution, expressed in placenta, lung, heart, brain, kidney and pancreas.

The protein resides in the cytoplasm. It is found in the perinuclear region. The protein localises to the golgi apparatus. Its subcellular location is the trans-Golgi network membrane. It localises to the nucleus. The protein resides in the nucleolus. It is found in the nucleus matrix. Its activity is regulated as follows. Inhibited by brefeldin A. In terms of biological role, promotes guanine-nucleotide exchange on ARF1 and ARF3. Promotes the activation of ARF1/ARF3 through replacement of GDP with GTP. Involved in vesicular trafficking. Required for the maintenance of Golgi structure; the function may be independent of its GEF activity. Required for the maturation of integrin beta-1 in the Golgi. Involved in the establishment and persistence of cell polarity during directed cell movement in wound healing. Proposed to act as A kinase-anchoring protein (AKAP) and may mediate crosstalk between Arf and PKA pathways. Inhibits GAP activity of MYO9B probably through competitive RhoA binding. The function in the nucleus remains to be determined. This chain is Brefeldin A-inhibited guanine nucleotide-exchange protein 1 (ARFGEF1), found in Homo sapiens (Human).